A 36-amino-acid polypeptide reads, in one-letter code: Protein P4 (36 aa).

A helical transmembrane segment spans residues 13–33 (GLQLSLLICACLLAVLIVSFC).

The protein localises to the host membrane. This chain is Protein P4, found in Vitis vinifera (Grape).